Reading from the N-terminus, the 235-residue chain is 2,3,4,5-tetrahydropyridine-2,6-dicarboxylate N-acetyltransferase (235 aa).

It belongs to the transferase hexapeptide repeat family. DapH subfamily.

The catalysed reaction is (S)-2,3,4,5-tetrahydrodipicolinate + acetyl-CoA + H2O = L-2-acetamido-6-oxoheptanedioate + CoA. It functions in the pathway amino-acid biosynthesis; L-lysine biosynthesis via DAP pathway; LL-2,6-diaminopimelate from (S)-tetrahydrodipicolinate (acetylase route): step 1/3. Functionally, catalyzes the transfer of an acetyl group from acetyl-CoA to tetrahydrodipicolinate. The polypeptide is 2,3,4,5-tetrahydropyridine-2,6-dicarboxylate N-acetyltransferase (Exiguobacterium sp. (strain ATCC BAA-1283 / AT1b)).